The sequence spans 278 residues: UPF0276 protein Ssed_2857 (278 aa).

This sequence belongs to the UPF0276 family.

The polypeptide is UPF0276 protein Ssed_2857 (Shewanella sediminis (strain HAW-EB3)).